The primary structure comprises 105 residues: MDTQDIVSEISELNLTYLMLAQQMLAKDRDAALFRLGISEELADILLTMSPAQIVKLASTNMLLCRFRFDDHAILGLVTQPHRDKGLQQSQMSILLARQAVEQIN.

The protein belongs to the FlhD family. As to quaternary structure, homodimer; disulfide-linked. Forms a heterohexamer composed of two FlhC and four FlhD subunits. Each FlhC binds a FlhD dimer, forming a heterotrimer, and a hexamer assembles by dimerization of two heterotrimers.

Its subcellular location is the cytoplasm. Its function is as follows. Functions in complex with FlhC as a master transcriptional regulator that regulates transcription of several flagellar and non-flagellar operons by binding to their promoter region. Activates expression of class 2 flagellar genes, including fliA, which is a flagellum-specific sigma factor that turns on the class 3 genes. Also regulates genes whose products function in a variety of physiological pathways. This Ralstonia nicotianae (strain ATCC BAA-1114 / GMI1000) (Ralstonia solanacearum) protein is Flagellar transcriptional regulator FlhD.